A 428-amino-acid polypeptide reads, in one-letter code: 3-oxo-tetronate kinase (428 aa).

Residues Ser-267, 365–368, and Gly-409 contribute to the ATP site; that span reads GGET.

The protein belongs to the four-carbon acid sugar kinase family.

It catalyses the reaction 3-dehydro-L-erythronate + ATP = 3-dehydro-4-O-phospho-L-erythronate + ADP + H(+). It carries out the reaction 3-dehydro-D-erythronate + ATP = 3-dehydro-4-O-phospho-D-erythronate + ADP + H(+). Its function is as follows. Catalyzes the ATP-dependent phosphorylation of 3-oxo-tetronate to 3-oxo-tetronate 4-phosphate. The sequence is that of 3-oxo-tetronate kinase from Burkholderia multivorans (strain ATCC 17616 / 249).